We begin with the raw amino-acid sequence, 45 residues long: Photosystem II reaction center protein K (45 aa).

A propeptide spanning residues M1 to A8 is cleaved from the precursor. A helical transmembrane segment spans residues A24–F44.

It belongs to the PsbK family. As to quaternary structure, PSII is composed of 1 copy each of membrane proteins PsbA, PsbB, PsbC, PsbD, PsbE, PsbF, PsbH, PsbI, PsbJ, PsbK, PsbL, PsbM, PsbT, PsbX, PsbY, PsbZ, Psb30/Ycf12, at least 3 peripheral proteins of the oxygen-evolving complex and a large number of cofactors. It forms dimeric complexes.

It localises to the plastid. The protein resides in the chloroplast thylakoid membrane. In terms of biological role, one of the components of the core complex of photosystem II (PSII). PSII is a light-driven water:plastoquinone oxidoreductase that uses light energy to abstract electrons from H(2)O, generating O(2) and a proton gradient subsequently used for ATP formation. It consists of a core antenna complex that captures photons, and an electron transfer chain that converts photonic excitation into a charge separation. This chain is Photosystem II reaction center protein K, found in Guillardia theta (Cryptophyte).